The primary structure comprises 298 residues: 5,10-methylenetetrahydrofolate reductase (298 aa).

Catalysis depends on Glu28, which acts as the Proton donor/acceptor. Residue Thr59 participates in NADH binding. Residues Tyr60, Ala62, His88, Arg118, Gly119, Asp120, Ala132, Tyr152, His156, Ala159, Asp165, Asn168, and Lys172 each coordinate FAD. Asp120 serves as a coordination point for (6S)-5-methyl-5,6,7,8-tetrahydrofolate. Position 183 (Gln183) interacts with NADH. Residues Gln183, Gln219, and Arg279 each coordinate (6S)-5-methyl-5,6,7,8-tetrahydrofolate.

It belongs to the methylenetetrahydrofolate reductase family. FAD serves as cofactor.

The catalysed reaction is (6S)-5-methyl-5,6,7,8-tetrahydrofolate + NAD(+) = (6R)-5,10-methylene-5,6,7,8-tetrahydrofolate + NADH + H(+). It functions in the pathway one-carbon metabolism; tetrahydrofolate interconversion. The protein operates within amino-acid biosynthesis; L-methionine biosynthesis via de novo pathway. Functionally, catalyzes the NADH-dependent reduction of 5,10-methylenetetrahydrofolate to 5-methyltetrahydrofolate. Is required to provide the methyl group necessary for methionine synthetase to convert homocysteine to methionine; the methyl group is given by 5-methyltetrahydrofolate. In Pectobacterium carotovorum subsp. carotovorum (Erwinia carotovora subsp. carotovora), this protein is 5,10-methylenetetrahydrofolate reductase (metF).